A 223-amino-acid polypeptide reads, in one-letter code: Ribonuclease HII (223 aa).

An RNase H type-2 domain is found at 32–223 (LYIAGVDEVG…LKKRYRDYMS (192 aa)). Positions 38, 39, and 130 each coordinate a divalent metal cation.

The protein belongs to the RNase HII family. The cofactor is Mn(2+). Mg(2+) is required as a cofactor.

Its subcellular location is the cytoplasm. The enzyme catalyses Endonucleolytic cleavage to 5'-phosphomonoester.. Functionally, endonuclease that specifically degrades the RNA of RNA-DNA hybrids. In Bartonella henselae (strain ATCC 49882 / DSM 28221 / CCUG 30454 / Houston 1) (Rochalimaea henselae), this protein is Ribonuclease HII.